Consider the following 207-residue polypeptide: Probable flagellin 2 (207 aa).

Residues 1–14 (MRVGSRKLRRDEKG) constitute a propeptide that is removed on maturation.

It belongs to the archaeal flagellin family.

The protein resides in the archaeal flagellum. In terms of biological role, flagellin is the subunit protein which polymerizes to form the filaments of archaeal flagella. The sequence is that of Probable flagellin 2 (flaB2) from Archaeoglobus fulgidus (strain ATCC 49558 / DSM 4304 / JCM 9628 / NBRC 100126 / VC-16).